Reading from the N-terminus, the 485-residue chain is Adenosylhomocysteinase (485 aa).

Substrate is bound by residues Thr-64, Asp-139, and Glu-205. 206–208 contacts NAD(+); it reads TTT. Substrate-binding residues include Lys-235 and Asp-239. NAD(+) is bound by residues Asn-240, 269 to 274, Glu-292, Asn-327, 348 to 350, and Asn-397; these read GYGDVG and IGH.

It belongs to the adenosylhomocysteinase family. Requires NAD(+) as cofactor.

The enzyme catalyses S-adenosyl-L-homocysteine + H2O = L-homocysteine + adenosine. The protein operates within amino-acid biosynthesis; L-homocysteine biosynthesis; L-homocysteine from S-adenosyl-L-homocysteine: step 1/1. In terms of biological role, adenosylhomocysteine is a competitive inhibitor of S-adenosyl-L-methionine-dependent methyl transferase reactions; therefore adenosylhomocysteinase may play a key role in the control of methylations via regulation of the intracellular concentration of adenosylhomocysteine. This chain is Adenosylhomocysteinase (SAHH), found in Medicago sativa (Alfalfa).